Reading from the N-terminus, the 367-residue chain is Undecaprenyl-phosphate alpha-N-acetylglucosaminyl 1-phosphate transferase (367 aa).

The next 10 helical transmembrane spans lie at 3 to 23 (LLTV…FLFF), 46 to 66 (LIPL…FGIV), 69 to 89 (YIPH…IGAL), 132 to 152 (VLGP…INAF), 158 to 178 (IDGL…MILW), 187 to 207 (IWCF…LGIL), 213 to 233 (VFMG…ILLE), 242 to 262 (ISPV…VAIM), 294 to 314 (AFVL…LAEY), and 318 to 338 (VPEW…GYCI).

It belongs to the glycosyltransferase 4 family. WecA subfamily. Mg(2+) is required as a cofactor. Mn(2+) serves as cofactor.

It localises to the cell inner membrane. The enzyme catalyses di-trans,octa-cis-undecaprenyl phosphate + UDP-N-acetyl-alpha-D-glucosamine = N-acetyl-alpha-D-glucosaminyl-di-trans,octa-cis-undecaprenyl diphosphate + UMP. Its pathway is bacterial outer membrane biogenesis; LPS O-antigen biosynthesis. The protein operates within bacterial outer membrane biogenesis; enterobacterial common antigen biosynthesis. Functionally, catalyzes the transfer of the GlcNAc-1-phosphate moiety from UDP-GlcNAc onto the carrier lipid undecaprenyl phosphate (C55-P), yielding GlcNAc-pyrophosphoryl-undecaprenyl (GlcNAc-PP-C55). The chain is Undecaprenyl-phosphate alpha-N-acetylglucosaminyl 1-phosphate transferase from Escherichia coli O157:H7.